Consider the following 149-residue polypeptide: Aquaporin-like protein 2 (149 aa).

A disordered region spans residues Met-1 to Ser-35. At Met-1–His-47 the chain is on the cytoplasmic side. A helical membrane pass occupies residues Phe-48–Ile-68. The Extracellular portion of the chain corresponds to Cys-69–Gln-89. A helical transmembrane segment spans residues Leu-90–Trp-110. Residues Gly-111–Arg-149 are Cytoplasmic-facing.

Belongs to the MIP/aquaporin (TC 1.A.8) family.

Its subcellular location is the endoplasmic reticulum membrane. The protein localises to the cell membrane. Functionally, water channel required to facilitate the transport of water across membranes. Involved in freeze tolerance, osmotolerance and cell flocculation in liquid cultures. Is non-functional in most laboratory strains. The chain is Aquaporin-like protein 2 (AQY2-2) from Saccharomyces cerevisiae (strain Lalvin EC1118 / Prise de mousse) (Baker's yeast).